A 111-amino-acid polypeptide reads, in one-letter code: Cystatin (111 aa).

Positions 3–103 constitute a Cystatin domain; it reads GGLSPRDVTD…CRFEVWSRPW (101 aa). The Secondary area of contact motif lies at 47-51; that stretch reads QVVSG. Cys65 and Cys81 are disulfide-bonded.

The protein belongs to the cystatin family. In terms of tissue distribution, expressed by the venom gland.

It localises to the secreted. Its function is as follows. Inhibits various C1 cysteine proteases including cathepsin L, papain and cathepsin B. This protein has no toxic activity and its function in the venom is unknown. It may play a role as housekeeping or regulatory protein. The polypeptide is Cystatin (Bitis arietans (African puff adder)).